The sequence spans 131 residues: Protein NrdI (131 aa).

The protein belongs to the NrdI family.

Functionally, probably involved in ribonucleotide reductase function. This is Protein NrdI from Bacillus licheniformis (strain ATCC 14580 / DSM 13 / JCM 2505 / CCUG 7422 / NBRC 12200 / NCIMB 9375 / NCTC 10341 / NRRL NRS-1264 / Gibson 46).